Reading from the N-terminus, the 248-residue chain is Ubiquinone/menaquinone biosynthesis C-methyltransferase UbiE (248 aa).

S-adenosyl-L-methionine is bound by residues serine 68 and aspartate 92.

The protein belongs to the class I-like SAM-binding methyltransferase superfamily. MenG/UbiE family.

It catalyses the reaction a 2-demethylmenaquinol + S-adenosyl-L-methionine = a menaquinol + S-adenosyl-L-homocysteine + H(+). The catalysed reaction is a 2-methoxy-6-(all-trans-polyprenyl)benzene-1,4-diol + S-adenosyl-L-methionine = a 5-methoxy-2-methyl-3-(all-trans-polyprenyl)benzene-1,4-diol + S-adenosyl-L-homocysteine + H(+). It functions in the pathway quinol/quinone metabolism; menaquinone biosynthesis; menaquinol from 1,4-dihydroxy-2-naphthoate: step 2/2. Its pathway is cofactor biosynthesis; ubiquinone biosynthesis. Its function is as follows. Methyltransferase required for the conversion of demethylmenaquinol (DMKH2) to menaquinol (MKH2) and the conversion of 2-polyprenyl-6-methoxy-1,4-benzoquinol (DDMQH2) to 2-polyprenyl-3-methyl-6-methoxy-1,4-benzoquinol (DMQH2). The protein is Ubiquinone/menaquinone biosynthesis C-methyltransferase UbiE of Rickettsia bellii (strain OSU 85-389).